A 145-amino-acid polypeptide reads, in one-letter code: Probable inactive ribonuclease-like protein 12 (145 aa).

Residues 1-19 (MVLMVVVFLLLLFWENELT) form the signal peptide.

It belongs to the pancreatic ribonuclease family.

The protein localises to the secreted. Its function is as follows. Does not exhibit any ribonuclease activity. In Mus musculus (Mouse), this protein is Probable inactive ribonuclease-like protein 12 (Rnase12).